We begin with the raw amino-acid sequence, 128 residues long: Probable 4-amino-4-deoxy-L-arabinose-phosphoundecaprenol flippase subunit ArnF (128 aa).

Residues 1 to 10 (MKGYLWGGAS) lie on the Cytoplasmic side of the membrane. A helical transmembrane segment spans residues 11–31 (VVLVTVAQLVLKWGMMNIPLL). At 32 to 47 (SLADINVQFLTMYFVQ) the chain is on the periplasmic side. Residues 48-68 (LASVMCGLMGYALSMLCWFFA) form a helical membrane-spanning segment. Residues 69-77 (LRYLPLNRA) lie on the Cytoplasmic side of the membrane. A helical membrane pass occupies residues 78 to 98 (YPLLSLSYALVYLGAVLLPWF). At 99–101 (NEP) the chain is on the periplasmic side. Residues 102–122 (ATLLKTLGAGFILLGIWLINI) form a helical membrane-spanning segment. The Cytoplasmic segment spans residues 123 to 128 (KPIKAS).

The protein belongs to the ArnF family. Heterodimer of ArnE and ArnF.

It localises to the cell inner membrane. It participates in bacterial outer membrane biogenesis; lipopolysaccharide biosynthesis. In terms of biological role, translocates 4-amino-4-deoxy-L-arabinose-phosphoundecaprenol (alpha-L-Ara4N-phosphoundecaprenol) from the cytoplasmic to the periplasmic side of the inner membrane. This is Probable 4-amino-4-deoxy-L-arabinose-phosphoundecaprenol flippase subunit ArnF from Yersinia pseudotuberculosis serotype O:1b (strain IP 31758).